Here is a 153-residue protein sequence, read N- to C-terminus: Transcription antitermination protein NusB (153 aa).

The protein belongs to the NusB family.

In terms of biological role, involved in transcription antitermination. Required for transcription of ribosomal RNA (rRNA) genes. Binds specifically to the boxA antiterminator sequence of the ribosomal RNA (rrn) operons. This Beutenbergia cavernae (strain ATCC BAA-8 / DSM 12333 / CCUG 43141 / JCM 11478 / NBRC 16432 / NCIMB 13614 / HKI 0122) protein is Transcription antitermination protein NusB.